A 201-amino-acid chain; its full sequence is 3-isopropylmalate dehydratase small subunit (201 aa).

This sequence belongs to the LeuD family. LeuD type 1 subfamily. As to quaternary structure, heterodimer of LeuC and LeuD.

The catalysed reaction is (2R,3S)-3-isopropylmalate = (2S)-2-isopropylmalate. It participates in amino-acid biosynthesis; L-leucine biosynthesis; L-leucine from 3-methyl-2-oxobutanoate: step 2/4. Its function is as follows. Catalyzes the isomerization between 2-isopropylmalate and 3-isopropylmalate, via the formation of 2-isopropylmaleate. This chain is 3-isopropylmalate dehydratase small subunit, found in Jannaschia sp. (strain CCS1).